The chain runs to 202 residues: GTP cyclohydrolase 1 (202 aa).

Positions 90, 93, and 163 each coordinate Zn(2+).

This sequence belongs to the GTP cyclohydrolase I family. As to quaternary structure, homomer.

It catalyses the reaction GTP + H2O = 7,8-dihydroneopterin 3'-triphosphate + formate + H(+). It participates in cofactor biosynthesis; 7,8-dihydroneopterin triphosphate biosynthesis; 7,8-dihydroneopterin triphosphate from GTP: step 1/1. The chain is GTP cyclohydrolase 1 from Mycobacterium ulcerans (strain Agy99).